Consider the following 673-residue polypeptide: G-protein-signaling modulator 1 (673 aa).

The tract at residues 1–507 (MASPAPPVAE…DLLSKFQSSR (507 aa)) is mediates association with membranes. TPR repeat units follow at residues 28–61 (CLEL…GTED), 66–99 (SAIY…ARTI), 106–139 (AKAS…AQEQ), 146–178 (ARAL…PPDV), 180–199 (ETLH…VKEL), 206–239 (GRAY…AKEF), 246–279 (RRAY…SRQL), 286–319 (AQAC…AQEL), and 326–359 (GRAC…SQEI). The interaction with STK11/LKB1 stretch occupies residues 361–485 (DRNGELTARM…VRVQVPRTGI (125 aa)). Ser410 carries the phosphoserine modification. Residue Arg418 is modified to Omega-N-methylarginine. A compositionally biased stretch (basic and acidic residues) spans 420-439 (PLDREQNGETHHTGDWRGPG). The interval 420–475 (PLDREQNGETHHTGDWRGPGRDSLPLPMRSRKYQEGPDAIERRPREGSHSPLDSAD) is disordered. Phosphoserine is present on residues Ser442, Ser467, Ser469, Ser490, and Ser491. Basic and acidic residues predominate over residues 451–467 (KYQEGPDAIERRPREGS). A GoLoco 1 domain is found at 493–515 (EECFFDLLSKFQSSRMDDQRCPL). Residues 508–531 (MDDQRCPLEEGQAGAAEATAAPSV) form a disordered region. Residues 516–528 (EEGQAGAAEATAA) show a composition bias toward low complexity. Residues Ser543 and Ser567 each carry the phosphoserine modification. GoLoco domains follow at residues 546–568 (TEEF…RASV), 594–616 (GDEF…RCPP), and 628–650 (DEDF…RVDL). Positions 644-673 (DEQRVDLAGSPEQEASGLPDPQQQCPPGAS) are disordered. Ser653 is modified (phosphoserine). Residues 664–673 (PQQQCPPGAS) are compositionally biased toward polar residues.

It belongs to the GPSM family. As to quaternary structure, interacts with GNAI1 and GNAI2 preferentially in their GDP-bound state. May also interact with GNAO1. Interacts with INSC/inscuteable and FRMPD1. Interacts with GNAI3. Interacts with STK11/LKB1 and MACF1. Post-translationally, phosphorylation regulates interaction with G(i/o) alpha. Expressed in neural progenitor cells (at protein level).

It is found in the cytoplasm. The protein localises to the cytosol. The protein resides in the endoplasmic reticulum membrane. Its subcellular location is the golgi apparatus membrane. It localises to the cell membrane. Its function is as follows. Guanine nucleotide dissociation inhibitor (GDI) which functions as a receptor-independent activator of heterotrimeric G-protein signaling. Keeps G(i/o) alpha subunit in its GDP-bound form thus uncoupling heterotrimeric G-proteins signaling from G protein-coupled receptors. Controls spindle orientation and asymmetric cell fate of cerebral cortical progenitors. May also be involved in macroautophagy in intestinal cells. May play a role in drug addiction. This is G-protein-signaling modulator 1 (Gpsm1) from Mus musculus (Mouse).